A 614-amino-acid polypeptide reads, in one-letter code: MVNVSVLSPVDDKKARLKHLIQRLPNLPGVYKMLGKNGDILYVGKAKSLKSRVNSYFAKTIDHPKTRALVARIHNIETIITRSETEALLLEQNLIKEYRPPYNVLLRDDKSYLYVFISADQPYPRLAYGRGKVNHQKGCFFGPFPSAHAAKETLVLMQKMFQMRQCTNTFFKQRKRPCLEYQIKRCRAPCVGLVSAEEYSEDVNNTIRFLKGDSSDIHSALIEKMEASAEELDFEKAVFYRDQLSMLREVQAKQAVYTVQGEADVIAIASQVGMTCVNVLTVRGGRVLGGKNYFPDVDSSQPLADNLSAFITSFYFQVTDDLPAEIMLSHELPDQVAVSEALASHFGSKVVIKTNVREHRAEWLDLAKLNTNNALKTKLGDYLELHARFGALKDVLADITDRTIDRIECFDISHTMGEATIGGCVVFDQSGSRRRDYRQYAIHDIVGGDDYAAMKQVLTRRYKKQPLPDLLLIDGGKGQLGIAKEVLTELGMLGDTLLIGVAKGEGRKAGLEVLHFIDHEPLDLPMDSKALHLLMHIRDEAHRFAITAHRKKRDKRRSSSVLEVIPGLGEKRRRDLLNHFGGLQQLLGASQQELAGVQGIGPILAKTVYKVLHE.

Positions 26–104 (NLPGVYKMLG…IKEYRPPYNV (79 aa)) constitute a GIY-YIG domain. Residues 215–250 (SDIHSALIEKMEASAEELDFEKAVFYRDQLSMLREV) form the UVR domain.

The protein belongs to the UvrC family. Interacts with UvrB in an incision complex.

It is found in the cytoplasm. In terms of biological role, the UvrABC repair system catalyzes the recognition and processing of DNA lesions. UvrC both incises the 5' and 3' sides of the lesion. The N-terminal half is responsible for the 3' incision and the C-terminal half is responsible for the 5' incision. This chain is UvrABC system protein C, found in Psychrobacter arcticus (strain DSM 17307 / VKM B-2377 / 273-4).